The primary structure comprises 449 residues: Heterogeneous nuclear ribonucleoprotein H (449 aa).

Met1 carries the N-acetylmethionine; in Heterogeneous nuclear ribonucleoprotein H; alternate modification. Met2 is modified (N-acetylmethionine; in Heterogeneous nuclear ribonucleoprotein H, N-terminally processed). The RRM 1 domain maps to 11 to 90; the sequence is FVVKVRGLPW…RYVEVFKSNN (80 aa). Ser23 is modified (phosphoserine). A Glycyl lysine isopeptide (Lys-Gly) (interchain with G-Cter in SUMO2) cross-link involves residue Lys35. Phosphoserine occurs at positions 54 and 63. Glycyl lysine isopeptide (Lys-Gly) (interchain with G-Cter in SUMO2) cross-links involve residues Lys87 and Lys98. The region spanning 111 to 188 is the RRM 2 domain; that stretch reads GFVRLRGLPF…RYIEIFKSSR (78 aa). At Arg233 the chain carries Dimethylated arginine; alternate. Arg233 bears the Omega-N-methylarginine; alternate mark. The stretch at 234–249 is one 1-1 repeat; that stretch reads GAYGGGYGGYDDYNGY. Positions 234–433 are 2 X 16 AA Gly-rich approximate repeats; sequence GAYGGGYGGY…YGGQSSMSGY (200 aa). Tyr246 bears the Phosphotyrosine mark. The RRM 3 domain occupies 289 to 364; sequence HCVHMRGLPY…RYVELFLNST (76 aa). Position 310 is a phosphoserine (Ser310). 3 tandem repeats follow at residues 354–372, 374–392, and 418–433. The tract at residues 354–392 is 2 X 19 AA perfect repeats; sequence HRYVELFLNSTAGASGGAYEHRYVELFLNSTAGASGGAY.

As to quaternary structure, part of a ternary complex containing FUBP2, PTBP1, PTBP2 and HNRNPH1. Identified in the spliceosome C complex. Interacts with IGF2BP1. Interacts with CUGBP1; the interaction is RNA-dependent. Interacts with MBNL1; the interaction in RNA-independent. In terms of tissue distribution, expressed ubiquitously.

It localises to the nucleus. It is found in the nucleoplasm. Functionally, this protein is a component of the heterogeneous nuclear ribonucleoprotein (hnRNP) complexes which provide the substrate for the processing events that pre-mRNAs undergo before becoming functional, translatable mRNAs in the cytoplasm. Mediates pre-mRNA alternative splicing regulation. Inhibits, together with CUGBP1, insulin receptor (IR) pre-mRNA exon 11 inclusion in myoblast. Binds to the IR RNA. Binds poly(RG). The protein is Heterogeneous nuclear ribonucleoprotein H (HNRNPH1) of Homo sapiens (Human).